The sequence spans 423 residues: Gamma-glutamyl phosphate reductase (423 aa).

This sequence belongs to the gamma-glutamyl phosphate reductase family.

Its subcellular location is the cytoplasm. The enzyme catalyses L-glutamate 5-semialdehyde + phosphate + NADP(+) = L-glutamyl 5-phosphate + NADPH + H(+). The protein operates within amino-acid biosynthesis; L-proline biosynthesis; L-glutamate 5-semialdehyde from L-glutamate: step 2/2. In terms of biological role, catalyzes the NADPH-dependent reduction of L-glutamate 5-phosphate into L-glutamate 5-semialdehyde and phosphate. The product spontaneously undergoes cyclization to form 1-pyrroline-5-carboxylate. This is Gamma-glutamyl phosphate reductase from Burkholderia pseudomallei (strain 1710b).